The primary structure comprises 461 residues: GTPase Der (461 aa).

EngA-type G domains follow at residues 9-171 (KTIA…NLNK) and 200-371 (IQVG…ECFS). GTP-binding positions include 15–22 (GQPNVGKS), 62–66 (DTGGM), 123–126 (NKID), 206–213 (GRVNVGKS), 253–257 (DTAGI), and 317–320 (NKWD). The KH-like domain maps to 372–456 (KRIPTSLLNS…PLILNAKDKK (85 aa)).

It belongs to the TRAFAC class TrmE-Era-EngA-EngB-Septin-like GTPase superfamily. EngA (Der) GTPase family. In terms of assembly, associates with the 50S ribosomal subunit.

Functionally, GTPase that plays an essential role in the late steps of ribosome biogenesis. The chain is GTPase Der from Helicobacter pylori (strain HPAG1).